Reading from the N-terminus, the 183-residue chain is MEVQELFLLALAISLDAFGVILCIGINKGITLKSSIIFVFSFGFFQFFLSFLGGYIGTIFNKYIVPIPTIVGGLIIIIVGILMITEGFKEKEESIFLNKIMYLILGVSVSIDALVIGFTTLSYINNLFYLFMSSLFMGLIATIICSLGIILSKYIKKISIISSYADYIGGIILILFGLKMLFF.

6 helical membrane-spanning segments follow: residues 6 to 26 (LFLL…CIGI), 36 to 56 (IIFV…GGYI), 64 to 84 (IVPI…ILMI), 100 to 120 (IMYL…GFTT), 130 to 150 (LFMS…LGII), and 158 to 178 (ISII…LFGL).

It belongs to the MntP (TC 9.B.29) family.

Its subcellular location is the cell membrane. Probably functions as a manganese efflux pump. The chain is Putative manganese efflux pump MntP 1 from Clostridium botulinum (strain Langeland / NCTC 10281 / Type F).